The chain runs to 368 residues: Probable acetylxylan esterase A (368 aa).

Positions Met-1–Ala-19 are cleaved as a signal peptide. The propeptide occupies Ser-20 to Arg-28. The segment at Gly-32–Phe-304 is catalytic. The active-site Charge relay system is the Ser-149. Residue Asn-191 is glycosylated (N-linked (GlcNAc...) asparagine). Residues Ala-305 to Val-333 form a ser/Thr-rich linker region. The disordered stretch occupies residues Gly-306–Gly-330. The span at Gly-307 to Gly-330 shows a compositional bias: low complexity. The CBM1 domain maps to Gly-332–Leu-368.

It belongs to the carbohydrate esterase 1 (CE1) family. AxeA subfamily. Monomer.

The protein localises to the secreted. It catalyses the reaction Deacetylation of xylans and xylo-oligosaccharides.. Its pathway is glycan degradation; xylan degradation. Functionally, acetylxylan esterase involved in the hydrolysis of xylan, a major structural heterogeneous polysaccharide found in plant biomass representing the second most abundant polysaccharide in the biosphere, after cellulose. Degrades acetylated xylans by cleaving acetyl side groups from the hetero-xylan backbone. In Neosartorya fischeri (strain ATCC 1020 / DSM 3700 / CBS 544.65 / FGSC A1164 / JCM 1740 / NRRL 181 / WB 181) (Aspergillus fischerianus), this protein is Probable acetylxylan esterase A (axeA).